Here is a 61-residue protein sequence, read N- to C-terminus: Photosystem II reaction center protein K (61 aa).

Residues 1–24 (MLNILSFIGICLNSFLYSSSFFVA) constitute a propeptide that is removed on maturation. The helical transmembrane segment at 40-60 (MPVIPLFFFLLAFVWQAAVSF) threads the bilayer.

Belongs to the PsbK family. PSII is composed of 1 copy each of membrane proteins PsbA, PsbB, PsbC, PsbD, PsbE, PsbF, PsbH, PsbI, PsbJ, PsbK, PsbL, PsbM, PsbT, PsbX, PsbY, PsbZ, Psb30/Ycf12, at least 3 peripheral proteins of the oxygen-evolving complex and a large number of cofactors. It forms dimeric complexes.

It localises to the plastid. The protein localises to the chloroplast thylakoid membrane. Its function is as follows. One of the components of the core complex of photosystem II (PSII). PSII is a light-driven water:plastoquinone oxidoreductase that uses light energy to abstract electrons from H(2)O, generating O(2) and a proton gradient subsequently used for ATP formation. It consists of a core antenna complex that captures photons, and an electron transfer chain that converts photonic excitation into a charge separation. The sequence is that of Photosystem II reaction center protein K from Cucumis sativus (Cucumber).